We begin with the raw amino-acid sequence, 414 residues long: tRNA(Ile)-lysidine synthase (414 aa).

13–18 (SGGIDS) is an ATP binding site.

Belongs to the tRNA(Ile)-lysidine synthase family.

The protein localises to the cytoplasm. The enzyme catalyses cytidine(34) in tRNA(Ile2) + L-lysine + ATP = lysidine(34) in tRNA(Ile2) + AMP + diphosphate + H(+). Functionally, ligates lysine onto the cytidine present at position 34 of the AUA codon-specific tRNA(Ile) that contains the anticodon CAU, in an ATP-dependent manner. Cytidine is converted to lysidine, thus changing the amino acid specificity of the tRNA from methionine to isoleucine. The chain is tRNA(Ile)-lysidine synthase from Thermotoga sp. (strain RQ2).